The primary structure comprises 136 residues: Large ribosomal subunit protein uL16 (136 aa).

Belongs to the universal ribosomal protein uL16 family. Part of the 50S ribosomal subunit.

Functionally, binds 23S rRNA and is also seen to make contacts with the A and possibly P site tRNAs. This chain is Large ribosomal subunit protein uL16, found in Orientia tsutsugamushi (strain Ikeda) (Rickettsia tsutsugamushi).